A 422-amino-acid polypeptide reads, in one-letter code: Gamma-glutamyl phosphate reductase (422 aa).

Belongs to the gamma-glutamyl phosphate reductase family.

The protein resides in the cytoplasm. The enzyme catalyses L-glutamate 5-semialdehyde + phosphate + NADP(+) = L-glutamyl 5-phosphate + NADPH + H(+). The protein operates within amino-acid biosynthesis; L-proline biosynthesis; L-glutamate 5-semialdehyde from L-glutamate: step 2/2. Its function is as follows. Catalyzes the NADPH-dependent reduction of L-glutamate 5-phosphate into L-glutamate 5-semialdehyde and phosphate. The product spontaneously undergoes cyclization to form 1-pyrroline-5-carboxylate. In Chloroflexus aurantiacus (strain ATCC 29366 / DSM 635 / J-10-fl), this protein is Gamma-glutamyl phosphate reductase.